Reading from the N-terminus, the 821-residue chain is Ent-pimara-8(14),15-diene synthase (821 aa).

Mg(2+)-binding residues include D556, D560, N701, T705, and E709. Residues D556–D560 carry the DDXXD motif motif.

It belongs to the terpene synthase family. Mg(2+) serves as cofactor. In terms of tissue distribution, highly expressed in roots, at intermediate levels in stems and at lower levels in leaves.

It catalyses the reaction ent-copalyl diphosphate = ent-pimara-8(14),15-diene + diphosphate. The protein operates within secondary metabolite biosynthesis; terpenoid biosynthesis. In terms of biological role, involved in the biosynthesis of ent-kaurene diterpenoids natural products. Catalyzes the conversion of ent-copalyl diphosphate to ent-pimara-8(14),15-diene. This Oryza sativa subsp. japonica (Rice) protein is Ent-pimara-8(14),15-diene synthase.